We begin with the raw amino-acid sequence, 1313 residues long: Kinesin-like protein KIN-12B (1313 aa).

The tract at residues 1–74 (MKHFMMPRNA…PPRPPSSNPL (74 aa)) is disordered. Polar residues predominate over residues 17 to 26 (ESQSPNPSLT). Residues 96 to 431 (GVKVIVRMKP…LRFAQRAKAI (336 aa)) enclose the Kinesin motor domain. 170–177 (GQTGSGKT) contacts ATP. Microtubules-binding regions lie at residues 298–302 (SSRSH), 331–337 (VDLAGSE), and 380–384 (HIPYR). Residues 429–467 (KAIQNKAIVNEVMQDDVNFLREVIRQLRDELQRVKDDKG) form a neck region. The segment at 685–709 (ESASPKIRNSRKSLRTTSMSTASQK) is disordered. Positions 699-708 (RTTSMSTASQ) are enriched in polar residues. Coiled coils occupy residues 932-1003 (LDEE…YTDS), 1062-1130 (AEEL…RIRE), and 1167-1241 (EKEV…TEIS).

This sequence belongs to the TRAFAC class myosin-kinesin ATPase superfamily. Kinesin family. KIN-12 subfamily. In terms of assembly, homodimer and heterodimer with KIN12A. Interacts with TIO.

Its subcellular location is the cytoplasm. It is found in the cytoskeleton. It localises to the phragmoplast. Plus-end directed kinesin-like motor enzyme that plays a critical role in the organization of phragmoplast microtubules during cytokinesis. Constitutes a signaling module in association with serine/threonine-protein kinase TIO that is required to support phragmoplast expansion and cell-plate growth in plant cells. In Arabidopsis thaliana (Mouse-ear cress), this protein is Kinesin-like protein KIN-12B.